A 1000-amino-acid chain; its full sequence is UPF0182 protein SCO5204 (1000 aa).

7 helical membrane passes run 26 to 48, 70 to 92, 121 to 143, 177 to 199, 220 to 237, 267 to 289, and 296 to 318; these read LLLT…GFWT, IGLF…WLAH, WLLL…GQWR, FLLG…THYL, LSVL…AYWL, LPAK…ATLW, and PVIG…PALV. Disordered regions lie at residues 884–908 and 943–1000; these read AETE…NPTV and EALQ…ADTG. Residues 888 to 897 are compositionally biased toward acidic residues; that stretch reads QPPDEGDDTT. 2 stretches are compositionally biased toward basic and acidic residues: residues 943–953 and 963–984; these read EALQRAEDAQA and NGDD…DKAG.

This sequence belongs to the UPF0182 family.

Its subcellular location is the cell membrane. This chain is UPF0182 protein SCO5204, found in Streptomyces coelicolor (strain ATCC BAA-471 / A3(2) / M145).